The following is a 585-amino-acid chain: Potassium-transporting ATPase potassium-binding subunit (585 aa).

The next 12 membrane-spanning stretches (helical) occupy residues 25–45, 84–104, 152–172, 194–214, 275–295, 307–327, 345–365, 368–388, 397–417, 437–457, 502–522, and 547–567; these read IIIF…SFYI, YFIN…LVIM, FVIT…SMAF, IFDL…LAGV, LEFV…GIVF, VIMF…YVGV, AIGV…STGA, GALV…LLLN, GVLN…LMVG, LSLV…LMIP, LDGV…LVIA, and LLLI…IIVL.

The protein belongs to the KdpA family. As to quaternary structure, the system is composed of three essential subunits: KdpA, KdpB and KdpC.

It localises to the cell membrane. Part of the high-affinity ATP-driven potassium transport (or Kdp) system, which catalyzes the hydrolysis of ATP coupled with the electrogenic transport of potassium into the cytoplasm. This subunit binds the extracellular potassium ions and delivers the ions to the membrane domain of KdpB through an intramembrane tunnel. This is Potassium-transporting ATPase potassium-binding subunit from Thermoplasma volcanium (strain ATCC 51530 / DSM 4299 / JCM 9571 / NBRC 15438 / GSS1).